Consider the following 460-residue polypeptide: CWF19-like protein 2 homolog (460 aa).

Disordered regions lie at residues 38 to 78, 103 to 175, and 193 to 227; these read GKTF…EDEK, KLES…TGTA, and RRHD…ESIK. Residues 54-68 show a composition bias toward polar residues; that stretch reads GSQQVRNDVMKSSDS. A coiled-coil region spans residues 84-106; that stretch reads KILKAEMKGDTDLVKKLKRKLES. 3 stretches are compositionally biased toward basic and acidic residues: residues 113–131, 139–172, and 205–227; these read EPPK…DREG, RRSD…EEKT, and EMQK…ESIK. The stretch at 210-231 forms a coiled coil; sequence KKKSDEKDKKRKEKESIKEHKR.

This sequence belongs to the CWF19 family.

The chain is CWF19-like protein 2 homolog from Caenorhabditis elegans.